The sequence spans 409 residues: Serine/threonine transporter SstT (409 aa).

9 consecutive transmembrane segments (helical) span residues 17–37, 49–69, 83–103, 142–162, 180–200, 218–238, 299–319, 331–351, and 357–377; these read LVVQIIVGLVAGLLLASFFPA, FVSALKAVAPVLVFVLVMASI, ILLLYLVGTFSAAVVAVIASF, ALISANFIGILAWAIGLGIAF, VSLIVKVVIRFAPLGIFGLVA, LVVLLGCMLFVAFVVNPLIVF, MAGAAITITVLTLAAVHTLGI, VVASVCACGASGVAGGSLLLI, and LFGIPSEVAMQVVAVGFIIAI.

This sequence belongs to the dicarboxylate/amino acid:cation symporter (DAACS) (TC 2.A.23) family.

The protein resides in the cell inner membrane. The enzyme catalyses L-serine(in) + Na(+)(in) = L-serine(out) + Na(+)(out). It catalyses the reaction L-threonine(in) + Na(+)(in) = L-threonine(out) + Na(+)(out). Its function is as follows. Involved in the import of serine and threonine into the cell, with the concomitant import of sodium (symport system). The protein is Serine/threonine transporter SstT of Pseudomonas paraeruginosa (strain DSM 24068 / PA7) (Pseudomonas aeruginosa (strain PA7)).